The chain runs to 590 residues: Myo-inositol transporter 3 (590 aa).

Residues 1 to 26 are compositionally biased toward basic and acidic residues; the sequence is MRTTHIEDRDNNSLENKHTDHIEGVE. The disordered stretch occupies residues 1–40; that stretch reads MRTTHIEDRDNNSLENKHTDHIEGVENGKGTQEPPSPSGF. Residues 1–57 are Cytoplasmic-facing; the sequence is MRTTHIEDRDNNSLENKHTDHIEGVENGKGTQEPPSPSGFGGHLIDENLVHVEGEDK. Residues 58–78 form a helical membrane-spanning segment; sequence VTWYLCFLISASAIAGFLFGY. Over 79–105 the chain is Extracellular; that stretch reads DTGVVGVALPLVGTDLGGNELNSSQQE. Asn100 is a glycosylation site (N-linked (GlcNAc...) asparagine). A helical transmembrane segment spans residues 106–126; sequence IITAGTTIGAIFGSAILGGWG. The Cytoplasmic segment spans residues 127–132; the sequence is DHLGRK. The helical transmembrane segment at 133 to 153 threads the bilayer; sequence MAILISDVFFTVGAVIIASSY. Residues 154-157 are Extracellular-facing; the sequence is SVPQ. A helical transmembrane segment spans residues 158–178; it reads IIVGRIVLGVGVGGAAVIAPL. Over 179-192 the chain is Cytoplasmic; sequence FITETAPTAVRGRC. The helical transmembrane segment at 193 to 213 threads the bilayer; that stretch reads IGVNAFFIPFGQLVADSIGAG. Residues 214-222 lie on the Extracellular side of the membrane; that stretch reads VQNMHGGWR. Residues 223–243 form a helical membrane-spanning segment; that stretch reads LLFALGAVPSLIQLLLFHYLP. The Cytoplasmic segment spans residues 244 to 325; the sequence is ESPRILIVKG…AVSVLQAAGQ (82 aa). A helical membrane pass occupies residues 326-346; sequence LCGFNTLLYYAGTLFGLLGLS. Over 347–349 the chain is Extracellular; it reads NPA. A helical membrane pass occupies residues 350-370; the sequence is LGGLIPAGTNAVFVLIGMSTV. Over 371–376 the chain is Cytoplasmic; sequence DKIGRR. The helical transmembrane segment at 377-397 threads the bilayer; sequence GLLLVGVPVLLLGLVWNIIGF. Residues 398-420 are Extracellular-facing; it reads YYMCKPTGGFLDTSYSYDTTNVG. A helical transmembrane segment spans residues 421–441; that stretch reads IVIGGIVFYVAGFGLTYSHLV. At 442-455 the chain is on the cytoplasmic side; that stretch reads WYQAEYLALEVRSM. The helical transmembrane segment at 456–476 threads the bilayer; that stretch reads GSGVATTVCWIANLVVSVSYL. Residues 477–485 lie on the Extracellular side of the membrane; that stretch reads SELETMTPS. The chain crosses the membrane as a helical span at residues 486-506; sequence GTYGFYLGLSVIAFVFVVFCF. Topologically, residues 507–590 are cytoplasmic; it reads PETKQLSIDE…GGKRKPQVLV (84 aa).

The protein belongs to the major facilitator superfamily. Sugar transporter (TC 2.A.1.1) family.

The protein resides in the cell membrane. The enzyme catalyses myo-inositol(out) + H(+)(out) = myo-inositol(in) + H(+)(in). In terms of biological role, transporter for myo-inositol. This Cryptococcus neoformans var. grubii serotype A (strain H99 / ATCC 208821 / CBS 10515 / FGSC 9487) (Filobasidiella neoformans var. grubii) protein is Myo-inositol transporter 3.